The sequence spans 273 residues: Dermonecrotic toxin LhSicTox-alphaIA2bi (273 aa).

Mg(2+)-binding residues include Glu-25 and Asp-27. The active-site Nucleophile is the His-41. 2 disulfide bridges follow: Cys-45–Cys-51 and Cys-47–Cys-190. Position 85 (Asp-85) interacts with Mg(2+).

Belongs to the arthropod phospholipase D family. Class II subfamily. It depends on Mg(2+) as a cofactor. Expressed by the venom gland.

The protein resides in the secreted. It carries out the reaction an N-(acyl)-sphingosylphosphocholine = an N-(acyl)-sphingosyl-1,3-cyclic phosphate + choline. It catalyses the reaction an N-(acyl)-sphingosylphosphoethanolamine = an N-(acyl)-sphingosyl-1,3-cyclic phosphate + ethanolamine. The catalysed reaction is a 1-acyl-sn-glycero-3-phosphocholine = a 1-acyl-sn-glycero-2,3-cyclic phosphate + choline. The enzyme catalyses a 1-acyl-sn-glycero-3-phosphoethanolamine = a 1-acyl-sn-glycero-2,3-cyclic phosphate + ethanolamine. Its function is as follows. Dermonecrotic toxins cleave the phosphodiester linkage between the phosphate and headgroup of certain phospholipids (sphingolipid and lysolipid substrates), forming an alcohol (often choline) and a cyclic phosphate. This toxin acts on sphingomyelin (SM). It may also act on ceramide phosphoethanolamine (CPE), lysophosphatidylcholine (LPC) and lysophosphatidylethanolamine (LPE), but not on lysophosphatidylserine (LPS), and lysophosphatidylglycerol (LPG). It acts by transphosphatidylation, releasing exclusively cyclic phosphate products as second products. Induces dermonecrosis, hemolysis, increased vascular permeability, edema, inflammatory response, and platelet aggregation. The protein is Dermonecrotic toxin LhSicTox-alphaIA2bi of Loxosceles hirsuta (Recluse spider).